Consider the following 201-residue polypeptide: Large ribosomal subunit protein uL4 (201 aa).

Residues R44–G71 are disordered.

This sequence belongs to the universal ribosomal protein uL4 family. Part of the 50S ribosomal subunit.

Its function is as follows. One of the primary rRNA binding proteins, this protein initially binds near the 5'-end of the 23S rRNA. It is important during the early stages of 50S assembly. It makes multiple contacts with different domains of the 23S rRNA in the assembled 50S subunit and ribosome. Forms part of the polypeptide exit tunnel. This is Large ribosomal subunit protein uL4 from Pectobacterium carotovorum subsp. carotovorum (strain PC1).